We begin with the raw amino-acid sequence, 141 residues long: Hemoglobin subunit alpha (141 aa).

The Globin domain occupies 1–141 (VLSANDKSNV…VSTVLTSKYR (141 aa)). Residue Ser3 is modified to Phosphoserine. Lys7 and Lys11 each carry N6-succinyllysine. Lys16 is modified (N6-acetyllysine; alternate). An N6-succinyllysine; alternate modification is found at Lys16. Phosphotyrosine is present on Tyr24. Ser35 carries the phosphoserine modification. An N6-succinyllysine modification is found at Lys40. Position 49 is a phosphoserine (Ser49). His58 contributes to the O2 binding site. His87 contributes to the heme b binding site. Residue Ser102 is modified to Phosphoserine. Residue Thr108 is modified to Phosphothreonine. The residue at position 124 (Ser124) is a Phosphoserine. A phosphothreonine mark is found at Thr134 and Thr137. Ser138 bears the Phosphoserine mark.

This sequence belongs to the globin family. As to quaternary structure, heterotetramer of two alpha chains and two beta chains. Red blood cells.

Functionally, involved in oxygen transport from the lung to the various peripheral tissues. Its function is as follows. Hemopressin acts as an antagonist peptide of the cannabinoid receptor CNR1. Hemopressin-binding efficiently blocks cannabinoid receptor CNR1 and subsequent signaling. This is Hemoglobin subunit alpha (HBA) from Hippopotamus amphibius (Hippopotamus).